Here is a 637-residue protein sequence, read N- to C-terminus: Threonine--tRNA ligase (637 aa).

Positions 1 to 61 (MLNITLPDGS…TEDSSVQIIT (61 aa)) constitute a TGS domain. The interval 242-533 (DHRKLGKQLD…LIENHAGSFP (292 aa)) is catalytic. Residues Cys-333, His-384, and His-510 each contribute to the Zn(2+) site.

The protein belongs to the class-II aminoacyl-tRNA synthetase family. Homodimer. Zn(2+) serves as cofactor.

Its subcellular location is the cytoplasm. The catalysed reaction is tRNA(Thr) + L-threonine + ATP = L-threonyl-tRNA(Thr) + AMP + diphosphate + H(+). In terms of biological role, catalyzes the attachment of threonine to tRNA(Thr) in a two-step reaction: L-threonine is first activated by ATP to form Thr-AMP and then transferred to the acceptor end of tRNA(Thr). Also edits incorrectly charged L-seryl-tRNA(Thr). The sequence is that of Threonine--tRNA ligase from Neisseria meningitidis serogroup C (strain 053442).